Here is a 95-residue protein sequence, read N- to C-terminus: Aspartyl/glutamyl-tRNA(Asn/Gln) amidotransferase subunit C (95 aa).

This sequence belongs to the GatC family. In terms of assembly, heterotrimer of A, B and C subunits.

It carries out the reaction L-glutamyl-tRNA(Gln) + L-glutamine + ATP + H2O = L-glutaminyl-tRNA(Gln) + L-glutamate + ADP + phosphate + H(+). The catalysed reaction is L-aspartyl-tRNA(Asn) + L-glutamine + ATP + H2O = L-asparaginyl-tRNA(Asn) + L-glutamate + ADP + phosphate + 2 H(+). Functionally, allows the formation of correctly charged Asn-tRNA(Asn) or Gln-tRNA(Gln) through the transamidation of misacylated Asp-tRNA(Asn) or Glu-tRNA(Gln) in organisms which lack either or both of asparaginyl-tRNA or glutaminyl-tRNA synthetases. The reaction takes place in the presence of glutamine and ATP through an activated phospho-Asp-tRNA(Asn) or phospho-Glu-tRNA(Gln). This is Aspartyl/glutamyl-tRNA(Asn/Gln) amidotransferase subunit C from Methylorubrum extorquens (strain CM4 / NCIMB 13688) (Methylobacterium extorquens).